Consider the following 402-residue polypeptide: MHRKVILLLTVSLLLRIGFFSYGIFQDSHFDVKYTDIDYFVFHDAAGYVNNGQSPYLRDTYRYTPLLSFLLLPNYYLKWIHMGKVFFVLFDLITGVMIIKLLQGSCQLTKQLILASIWLLNPIVITISTRGNAESVLCFLIICALYFLKRDRLLISGLFYGLSIHFKIYPIIYALPIGIYLLLSSHNRNCIWRLFMIGISTLIGITAPTYFMYKLYGSEFIEHSYMYHLTRTDHRHNFSIWNLVLLLESAGIHLSQSIELSKLAFVPQLTLCAVLPYLLWKSQTFENLMNVLFVQTYAFVTFNKVCTSQYFIWYLVLSPFYFANTTITWRKGVVCIFLWILSQAVWLSQAYLLEFKGQNVFFPNLFFGNIVFFLINVYLLGVFITDIKSRTSFQDNQHKKNI.

10 helical membrane-spanning segments follow: residues 5–25 (VILL…YGIF), 79–99 (WIHM…VMII), 108–128 (LTKQ…ITIS), 162–182 (LSIH…IYLL), 191–211 (IWRL…PTYF), 238–258 (FSIW…SQSI), 260–280 (LSKL…YLLW), 309–329 (QYFI…TITW), 333–353 (VVCI…AYLL), and 365–385 (LFFG…VFIT).

This sequence belongs to the PIGM family.

The protein localises to the endoplasmic reticulum membrane. The protein operates within glycolipid biosynthesis; glycosylphosphatidylinositol-anchor biosynthesis. Functionally, mannosyltransferase involved in glycosylphosphatidylinositol-anchor biosynthesis. Transfers the first alpha-1,4-mannose to GlcN-acyl-PI during GPI precursor assembly. Required for cell wall integrity. In Kluyveromyces lactis (strain ATCC 8585 / CBS 2359 / DSM 70799 / NBRC 1267 / NRRL Y-1140 / WM37) (Yeast), this protein is GPI mannosyltransferase 1 (GPI14).